We begin with the raw amino-acid sequence, 500 residues long: Autophagy-related protein 18 (500 aa).

One copy of the WD 1 repeat lies at 3–41 (DSSPTINFINFNQTGTCISLGTSKGFKIFNCEPFGKFYS). Positions 174–197 (VGGNTETSFKRDQQDAGHSDISDL) are disordered. A compositionally biased stretch (basic and acidic residues) spans 181–194 (SFKRDQQDAGHSDI). 2 WD repeats span residues 243–283 (AHKG…KIYQ) and 288–327 (TYAT…SNNK). A L/FRRG motif motif is present at residues 284–288 (FRRGT). Positions 328–358 (LDSDDSNMEEAAADDSSLDTTSIDALSDEEN) are disordered. The span at 331–344 (DDSNMEEAAADDSS) shows a compositional bias: acidic residues. Phosphoserine is present on Ser-354.

This sequence belongs to the WD repeat PROPPIN family. As to quaternary structure, component of the PI(3,5)P2 regulatory complex, composed of ATG18, FIG4, FAB1, VAC14 and VAC7. VAC14 nucleates the assembly of the complex and serves as a scaffold. Interacts with ATG2, ATG9 and VAC17. The ATG2-ATG18 complex is essential for autophagosome formation.

The protein localises to the preautophagosomal structure membrane. It localises to the vacuole membrane. Its subcellular location is the endosome membrane. In terms of biological role, the PI(3,5)P2 regulatory complex regulates both the synthesis and turnover of phosphatidylinositol 3,5-bisphosphate (PtdIns(3,5)P2). May negatively regulate FAB1 activity by sequestering or masking VAC7 from FAB1. Necessary for proper vacuole morphology. Plays an important role in osmotically-induced vacuole fragmentation. Required for cytoplasm to vacuole transport (Cvt) vesicle formation, pexophagy and starvation-induced autophagy. Involved in correct ATG9 trafficking to the pre-autophagosomal structure. Might also be involved in premeiotic DNA replication. With ATG2, protects ATG8 from ARG4-mediated cleavage. The polypeptide is Autophagy-related protein 18 (ATG18) (Saccharomyces cerevisiae (strain YJM789) (Baker's yeast)).